Here is a 122-residue protein sequence, read N- to C-terminus: Large ribosomal subunit protein uL14 (122 aa).

The protein belongs to the universal ribosomal protein uL14 family. As to quaternary structure, part of the 50S ribosomal subunit. Forms a cluster with proteins L3 and L19. In the 70S ribosome, L14 and L19 interact and together make contacts with the 16S rRNA in bridges B5 and B8.

Functionally, binds to 23S rRNA. Forms part of two intersubunit bridges in the 70S ribosome. In Limosilactobacillus fermentum (strain NBRC 3956 / LMG 18251) (Lactobacillus fermentum), this protein is Large ribosomal subunit protein uL14.